Reading from the N-terminus, the 494-residue chain is Inosine-5'-monophosphate dehydrogenase (494 aa).

2 CBS domains span residues 93 to 154 and 158 to 217; these read IIRN…NEKI and MTTD…CKDM. Residues D251 and 301-303 contribute to the NAD(+) site; that span reads GIG. The K(+) site is built by G303 and G305. S306 contributes to the IMP binding site. Residue C308 participates in K(+) binding. The active-site Thioimidate intermediate is the C308. IMP-binding positions include 341–343, 364–365, and 388–392; these read DGG, GS, and YRGMG. The active-site Proton acceptor is R406. Residue E421 participates in IMP binding. Residues E475, S476, and H477 each coordinate K(+).

The protein belongs to the IMPDH/GMPR family. Homotetramer. Requires K(+) as cofactor.

It catalyses the reaction IMP + NAD(+) + H2O = XMP + NADH + H(+). It functions in the pathway purine metabolism; XMP biosynthesis via de novo pathway; XMP from IMP: step 1/1. With respect to regulation, mycophenolic acid (MPA) is a non-competitive inhibitor that prevents formation of the closed enzyme conformation by binding to the same site as the amobile flap. In contrast, mizoribine monophosphate (MZP) is a competitive inhibitor that induces the closed conformation. MPA is a potent inhibitor of mammalian IMPDHs but a poor inhibitor of the bacterial enzymes. MZP is a more potent inhibitor of bacterial IMPDH. Catalyzes the conversion of inosine 5'-phosphate (IMP) to xanthosine 5'-phosphate (XMP), the first committed and rate-limiting step in the de novo synthesis of guanine nucleotides, and therefore plays an important role in the regulation of cell growth. This chain is Inosine-5'-monophosphate dehydrogenase, found in Chlorobaculum parvum (strain DSM 263 / NCIMB 8327) (Chlorobium vibrioforme subsp. thiosulfatophilum).